The sequence spans 341 residues: MPSRIPLPAFCCFLLPWAFTSFHKALGNPAPHPGPHYLLPPIHEVIHSRRGATATLPCVLGTSPPSYKVRWSKVEPGELRETLILITNGLHARDYGLLGGRASLRRGHRLDASLIIKNVRLEDEGRYRCELINGIEDESVALTLRLEGVVFPYQPSRGRYQFNYFEAKRACEEQDGRLATYGQLYQAWTEGLDWCNAGWLLEGSVRYPVLTARAPCGGHGRPGIRSYGPRDRSRDRYDAFCFTSALAGQVFFVPGRLTLSEAHAACRRRGAVVAKVGHLYAAWKFSGLDQCDGGWLADGSVRFPITTPRPRCGGLPDPGVRSFGFPRPQQASYGTYCYAEK.

A signal peptide spans 1–27 (MPSRIPLPAFCCFLLPWAFTSFHKALG). The Ig-like V-type domain occupies 35-143 (PHYLLPPIHE…GIEDESVALT (109 aa)). Intrachain disulfides connect Cys58–Cys129, Cys171–Cys241, Cys195–Cys216, Cys266–Cys337, and Cys291–Cys312. Link domains follow at residues 149–243 (VVFP…FCFT) and 246–339 (LAGQ…YCYA).

The protein belongs to the HAPLN family. As to expression, brain. Predominantly expressed by neurons. Colocalizes with versican V2 in developing and adult cerebellar white matter and at the nodes of Ranvier.

Its subcellular location is the secreted. It is found in the extracellular space. The protein localises to the extracellular matrix. Functionally, mediates a firm binding of versican V2 to hyaluronic acid. May play a pivotal role in the formation of the hyaluronan-associated matrix in the central nervous system (CNS) which facilitates neuronal conduction and general structural stabilization. Binds to hyaluronic acid. In Mus musculus (Mouse), this protein is Hyaluronan and proteoglycan link protein 2 (Hapln2).